A 1343-amino-acid chain; its full sequence is Xanthine dehydrogenase (1343 aa).

The 88-residue stretch at 8-95 (SELVFFVNGK…GCAVTTVEGI (88 aa)) folds into the 2Fe-2S ferredoxin-type domain. [2Fe-2S] cluster-binding residues include C47, C52, C55, C77, C117, C120, C152, and C154. The FAD-binding PCMH-type domain maps to 235–424 (FSSERVTWYR…LGIHFQKTTP (190 aa)). FAD-binding positions include 263-270 (LVVGNTEV), F343, 353-357 (CLGGN), D366, L414, and K432. Residues Q780 and F811 each contribute to the Mo-molybdopterin site. Substrate-binding residues include E815 and R893. R925 contacts Mo-molybdopterin. Residue F927 coordinates substrate. A1092 contacts Mo-molybdopterin. Catalysis depends on E1275, which acts as the Proton acceptor.

It belongs to the xanthine dehydrogenase family. In terms of assembly, homodimer. FAD is required as a cofactor. It depends on Mo-molybdopterin as a cofactor. Requires [2Fe-2S] cluster as cofactor.

Its subcellular location is the peroxisome. The catalysed reaction is xanthine + NAD(+) + H2O = urate + NADH + H(+). It catalyses the reaction hypoxanthine + NAD(+) + H2O = xanthine + NADH + H(+). Its function is as follows. Key enzyme in purine degradation. Catalyzes the oxidation of hypoxanthine to xanthine. Catalyzes the oxidation of xanthine to uric acid. The sequence is that of Xanthine dehydrogenase (ry) from Drosophila pseudoobscura pseudoobscura (Fruit fly).